The primary structure comprises 449 residues: Tubulin alpha-1B chain (449 aa).

Q11 contacts GTP. K40 bears the N6-acetyllysine mark. E71, S140, G144, T145, T179, N206, and N228 together coordinate GTP. E71 serves as a coordination point for Mg(2+). E254 is an active-site residue.

Belongs to the tubulin family. Dimer of alpha and beta chains. A typical microtubule is a hollow water-filled tube with an outer diameter of 25 nm and an inner diameter of 15 nM. Alpha-beta heterodimers associate head-to-tail to form protofilaments running lengthwise along the microtubule wall with the beta-tubulin subunit facing the microtubule plus end conferring a structural polarity. Microtubules usually have 13 protofilaments but different protofilament numbers can be found in some organisms and specialized cells. The cofactor is Mg(2+). Post-translationally, acetylation of alpha chains at Lys-40 stabilizes microtubules and affects affinity and processivity of microtubule motors. This modification has a role in multiple cellular functions, ranging from cell motility, cell cycle progression or cell differentiation to intracellular trafficking and signaling.

Its subcellular location is the cytoplasm. It is found in the cytoskeleton. The protein localises to the spindle. It localises to the nucleus. The enzyme catalyses GTP + H2O = GDP + phosphate + H(+). In terms of biological role, tubulin is the major constituent of microtubules, a cylinder consisting of laterally associated linear protofilaments composed of alpha- and beta-tubulin heterodimers. Microtubules grow by the addition of GTP-tubulin dimers to the microtubule end, where a stabilizing cap forms. Below the cap, tubulin dimers are in GDP-bound state, owing to GTPase activity of alpha-tubulin. The polypeptide is Tubulin alpha-1B chain (ALTBN) (Physarum polycephalum (Slime mold)).